The primary structure comprises 259 residues: Proteasome subunit alpha (259 aa).

It belongs to the peptidase T1A family. As to quaternary structure, the 20S proteasome core is composed of 14 alpha and 14 beta subunits that assemble into four stacked heptameric rings, resulting in a barrel-shaped structure. The two inner rings, each composed of seven catalytic beta subunits, are sandwiched by two outer rings, each composed of seven alpha subunits. The catalytic chamber with the active sites is on the inside of the barrel. Has a gated structure, the ends of the cylinder being occluded by the N-termini of the alpha-subunits. Is capped at one or both ends by the proteasome regulatory ATPase, PAN.

It localises to the cytoplasm. Its activity is regulated as follows. The formation of the proteasomal ATPase PAN-20S proteasome complex, via the docking of the C-termini of PAN into the intersubunit pockets in the alpha-rings, triggers opening of the gate for substrate entry. Interconversion between the open-gate and close-gate conformations leads to a dynamic regulation of the 20S proteasome proteolysis activity. In terms of biological role, component of the proteasome core, a large protease complex with broad specificity involved in protein degradation. The polypeptide is Proteasome subunit alpha (Methanococcus maripaludis (strain C6 / ATCC BAA-1332)).